Reading from the N-terminus, the 1856-residue chain is DNA-directed RNA polymerase II subunit RPB1 (1856 aa).

C66, C69, C76, H79, C106, C109, C149, and C177 together coordinate Zn(2+). Positions P256–D268 are lid loop. The segment at N314–K331 is rudder loop. Mg(2+) contacts are provided by D489, D491, and D493. The bridging helix stretch occupies residues P827–E839. Residue K1260 forms a Glycyl lysine isopeptide (Lys-Gly) (interchain with G-Cter in ubiquitin) linkage. The disordered stretch occupies residues P1523 to S1856. Residues S1587–S1856 are compositionally biased toward low complexity. Tandem repeats lie at residues Y1593–S1599, Y1600–A1606, Y1616–S1622, Y1623–S1629, Y1630–S1636, Y1637–S1643, Y1644–S1650, Y1651–S1657, Y1658–S1664, Y1665–S1671, Y1672–R1678, Y1679–T1685, Y1686–T1692, Y1693–T1699, Y1700–T1706, Y1707–S1713, Y1720–K1726, Y1727–T1733, Y1734–S1740, Y1741–Q1747, Y1748–Q1754, Y1755–T1761, Y1769–R1775, Y1782–T1788, Y1789–S1795, Y1796–Q1802, and Y1803–T1809. The C-terminal domain (CTD); 28 X 7 AA approximate tandem repeats of Y-[ST]-P-[ST]-S-P-[AGKNQRST] stretch occupies residues Y1593 to E1816. A 28; approximate repeat occupies Y1810–E1816.

Belongs to the RNA polymerase beta' chain family. In terms of assembly, component of the RNA polymerase II (Pol II) complex consisting of 12 subunits. Interacts with sig-7. The tandem 7 residues repeats in the C-terminal domain (CTD) can be highly phosphorylated. The phosphorylation activates Pol II. Phosphorylation occurs mainly at residues 'Ser-2' and 'Ser-5' of the heptapeptide repeat and starts at the 3- to 4-cell embryonic stage. This phosphorylation also occurs in the early stages of oocyte development and is not detected in oocytes arrested at the meiotic diakinesis stage. In the somatic lineage, phosphorylation at 'Ser-2' is mediated by cdk-12 downstream of cdk-9 whereas in the germline lineage cdk-12 phosphorylates 'Ser-2' independently of cdk-9. Phosphorylation is likely mediated by cdk-7. May be dephosphorylated by fcp-1 in diakinetic oocytes and in 1-cell and 2-cell embryos. Dephosphorylated at 'Ser-5' of the heptapeptide repeats by ssup-72. The phosphorylation state is believed to result from the balanced action of site-specific CTD kinases and phosphatase, and a 'CTD code' that specifies the position of Pol II within the transcription cycle has been proposed. Post-translationally, following transcription stress, the elongating form of RNA polymerase II (RNA pol IIo) is polyubiquitinated via 'Lys-63'-linkages on Lys-1260 at DNA damage sites without leading to degradation: ubiquitination promotes RNA pol IIo backtracking to allow access by the transcription-coupled nucleotide excision repair (TC-NER) machinery. Subsequent DEF1-dependent polyubiquitination by the elongin complex via 'Lys-48'-linkages may lead to proteasome-mediated degradation; presumably at stalled RNA pol II where TC-NER has failed, to halt global transcription and enable 'last resort' DNA repair pathways.

The protein localises to the nucleus. The protein resides in the chromosome. It carries out the reaction RNA(n) + a ribonucleoside 5'-triphosphate = RNA(n+1) + diphosphate. Functionally, DNA-dependent RNA polymerase catalyzes the transcription of DNA into RNA using the four ribonucleoside triphosphates as substrates. Largest and catalytic component of RNA polymerase II which synthesizes mRNA precursors and many functional non-coding RNAs. Forms the polymerase active center together with the second largest subunit. Pol II is the central component of the basal RNA polymerase II transcription machinery. It is composed of mobile elements that move relative to each other. RPB1 is part of the core element with the central large cleft, the clamp element that moves to open and close the cleft and the jaws that are thought to grab the incoming DNA template. At the start of transcription, a single-stranded DNA template strand of the promoter is positioned within the central active site cleft of Pol II. A bridging helix emanates from RPB1 and crosses the cleft near the catalytic site and is thought to promote translocation of Pol II by acting as a ratchet that moves the RNA-DNA hybrid through the active site by switching from straight to bent conformations at each step of nucleotide addition. During transcription elongation, Pol II moves on the template as the transcript elongates. Elongation is influenced by the phosphorylation status of the C-terminal domain (CTD) of Pol II largest subunit (RPB1), which serves as a platform for assembly of factors that regulate transcription initiation, elongation, termination and mRNA processing. Involved in the transcription of several genes including those involved in embryogenesis. The protein is DNA-directed RNA polymerase II subunit RPB1 of Caenorhabditis elegans.